Consider the following 197-residue polypeptide: Peptide deformylase (197 aa).

Fe cation-binding residues include C106 and H148. Residue E149 is part of the active site. Residue H152 participates in Fe cation binding.

Belongs to the polypeptide deformylase family. Fe(2+) is required as a cofactor.

It carries out the reaction N-terminal N-formyl-L-methionyl-[peptide] + H2O = N-terminal L-methionyl-[peptide] + formate. Functionally, removes the formyl group from the N-terminal Met of newly synthesized proteins. Requires at least a dipeptide for an efficient rate of reaction. N-terminal L-methionine is a prerequisite for activity but the enzyme has broad specificity at other positions. This chain is Peptide deformylase, found in Mycolicibacterium paratuberculosis (strain ATCC BAA-968 / K-10) (Mycobacterium paratuberculosis).